The sequence spans 427 residues: 3-phosphoshikimate 1-carboxyvinyltransferase (427 aa).

3-phosphoshikimate is bound by residues Lys22, Ser23, and Arg27. Residue Lys22 participates in phosphoenolpyruvate binding. The phosphoenolpyruvate site is built by Gly96 and Arg124. 3-phosphoshikimate contacts are provided by Ser169, Ser170, Gln171, Ser197, Asp313, Asn336, and Lys340. Position 171 (Gln171) interacts with phosphoenolpyruvate. Catalysis depends on Asp313, which acts as the Proton acceptor. The phosphoenolpyruvate site is built by Arg344, Arg386, and Lys411.

This sequence belongs to the EPSP synthase family. As to quaternary structure, monomer.

The protein localises to the cytoplasm. The enzyme catalyses 3-phosphoshikimate + phosphoenolpyruvate = 5-O-(1-carboxyvinyl)-3-phosphoshikimate + phosphate. The protein operates within metabolic intermediate biosynthesis; chorismate biosynthesis; chorismate from D-erythrose 4-phosphate and phosphoenolpyruvate: step 6/7. In terms of biological role, catalyzes the transfer of the enolpyruvyl moiety of phosphoenolpyruvate (PEP) to the 5-hydroxyl of shikimate-3-phosphate (S3P) to produce enolpyruvyl shikimate-3-phosphate and inorganic phosphate. In Enterobacter sp. (strain 638), this protein is 3-phosphoshikimate 1-carboxyvinyltransferase.